The primary structure comprises 289 residues: Alpha-soluble NSF attachment protein (289 aa).

The TPR repeat unit spans residues 112-145 (GKYYKEIAELYELEQNFEQAIIYFEKAADIYQSE).

It belongs to the SNAP family.

It is found in the membrane. Functionally, required for vesicular transport between the endoplasmic reticulum and the Golgi apparatus. The chain is Alpha-soluble NSF attachment protein from Vitis vinifera (Grape).